The sequence spans 444 residues: Xaa-Pro dipeptidase (444 aa).

5 residues coordinate Mn(2+): Asp-247, Asp-258, His-340, Glu-385, and Glu-424.

This sequence belongs to the peptidase M24B family. Bacterial-type prolidase subfamily. Requires Mn(2+) as cofactor.

It catalyses the reaction Xaa-L-Pro dipeptide + H2O = an L-alpha-amino acid + L-proline. Functionally, splits dipeptides with a prolyl residue in the C-terminal position. The sequence is that of Xaa-Pro dipeptidase from Photorhabdus laumondii subsp. laumondii (strain DSM 15139 / CIP 105565 / TT01) (Photorhabdus luminescens subsp. laumondii).